A 282-amino-acid polypeptide reads, in one-letter code: 2-dehydro-3-deoxyphosphooctonate aldolase (282 aa).

It belongs to the KdsA family.

The protein resides in the cytoplasm. It catalyses the reaction D-arabinose 5-phosphate + phosphoenolpyruvate + H2O = 3-deoxy-alpha-D-manno-2-octulosonate-8-phosphate + phosphate. It functions in the pathway carbohydrate biosynthesis; 3-deoxy-D-manno-octulosonate biosynthesis; 3-deoxy-D-manno-octulosonate from D-ribulose 5-phosphate: step 2/3. The protein operates within bacterial outer membrane biogenesis; lipopolysaccharide biosynthesis. In Shewanella amazonensis (strain ATCC BAA-1098 / SB2B), this protein is 2-dehydro-3-deoxyphosphooctonate aldolase.